Consider the following 401-residue polypeptide: 8-amino-7-oxononanoate synthase (401 aa).

Position 24 (Arg-24) interacts with substrate. Gly-111 to Phe-112 contacts pyridoxal 5'-phosphate. Position 137 (His-137) interacts with substrate. Pyridoxal 5'-phosphate-binding residues include Ser-183, His-211, and Thr-240. Lys-243 bears the N6-(pyridoxal phosphate)lysine mark. Thr-357 contributes to the substrate binding site.

This sequence belongs to the class-II pyridoxal-phosphate-dependent aminotransferase family. BioF subfamily. As to quaternary structure, homodimer. The cofactor is pyridoxal 5'-phosphate.

The catalysed reaction is 6-carboxyhexanoyl-[ACP] + L-alanine + H(+) = (8S)-8-amino-7-oxononanoate + holo-[ACP] + CO2. The protein operates within cofactor biosynthesis; biotin biosynthesis. Its function is as follows. Catalyzes the decarboxylative condensation of pimeloyl-[acyl-carrier protein] and L-alanine to produce 8-amino-7-oxononanoate (AON), [acyl-carrier protein], and carbon dioxide. This chain is 8-amino-7-oxononanoate synthase, found in Xylella fastidiosa (strain M23).